Consider the following 361-residue polypeptide: Pseudouridine-5'-phosphate glycosidase (361 aa).

Residue Glu-27 is the Proton donor of the active site. Substrate-binding residues include Lys-88 and Val-108. Asp-140 is a binding site for Mn(2+). 142–144 provides a ligand contact to substrate; sequence SAD. Lys-161 functions as the Nucleophile in the catalytic mechanism. Positions 306–361 are disordered; it reads DRSPTDPAAPDPTAPDPAAPDPTAPDPAAPDSAAPDLAGPDPSAPDPAAVARAHRP. Residues 312–333 show a composition bias toward pro residues; it reads PAAPDPTAPDPAAPDPTAPDPA. The span at 334 to 354 shows a compositional bias: low complexity; sequence APDSAAPDLAGPDPSAPDPAA.

It belongs to the pseudouridine-5'-phosphate glycosidase family. Homotrimer. Mn(2+) is required as a cofactor.

It carries out the reaction D-ribose 5-phosphate + uracil = psi-UMP + H2O. Functionally, catalyzes the reversible cleavage of pseudouridine 5'-phosphate (PsiMP) to ribose 5-phosphate and uracil. Functions biologically in the cleavage direction, as part of a pseudouridine degradation pathway. The protein is Pseudouridine-5'-phosphate glycosidase of Frankia alni (strain DSM 45986 / CECT 9034 / ACN14a).